We begin with the raw amino-acid sequence, 712 residues long: Lactoperoxidase (712 aa).

A signal peptide spans 1–22 (MWVCLQLPVFLASVTLFEVAAS). The propeptide occupies 23–100 (DTIAQAASTT…WEESLKRLRR (78 aa)). N106 carries an N-linked (GlcNAc...) asparagine glycan. 4 disulfides stabilise this stretch: C123–C284, C132–C145, C246–C256, and C250–C274. The N-linked (GlcNAc...) asparagine glycan is linked to N212. Residue D225 coordinates heme b. H226 functions as the Proton acceptor in the catalytic mechanism. Ca(2+) is bound at residue D227. Residues T301, F303, D305, and S307 each contribute to the Ca(2+) site. S315 is modified (phosphoserine). 2 N-linked (GlcNAc...) asparagine glycosylation sites follow: N322 and N358. An intrachain disulfide couples C354 to C365. E375 is a heme b binding site. An N-linked (GlcNAc...) asparagine glycan is attached at N449. H468 provides a ligand contact to heme b. Y482 is subject to 3'-nitrotyrosine. Disulfide bonds link C573–C630 and C671–C696.

The protein belongs to the peroxidase family. XPO subfamily. Ca(2+) is required as a cofactor. It depends on heme b as a cofactor. Mammary gland; milk.

Its subcellular location is the secreted. The protein localises to the cytoplasm. It carries out the reaction 2 a phenolic donor + H2O2 = 2 a phenolic radical donor + 2 H2O. It catalyses the reaction thiocyanate + H2O2 + H(+) = hypothiocyanous acid + H2O. The catalysed reaction is iodide + H2O2 = hypoiodite + H2O. Heme-containing oxidoreductase which catalyzes the conversion of thiocyanate (SCN(-)) into antimicrobial agent hypothiocyanous acid (OSCN(-)) in the presence of hydrogen peroxide (H2O2). Also involved in the conversion of iodide (I(-)) into hypoiodite (IO(-)) in the presence of H2O2. Responsible for the inactivation of a wide range of micro-organisms and hence, important component of defense mechanism. The lactoperoxidase-SCN(-)-H2O2 system shows antibacterial properties against some streptococci strains. The lactoperoxidase-I(-)-H2O2 system shows antibacterial properties against E.coli. May protect the udder from infection and may promote growth in newborns. May be implicated in airway host defense against infection. May contribute to maintaining an appropriate H2O2 cellular level, therefore protecting cells from H2O2-caused injuries and inflammation. This Bos taurus (Bovine) protein is Lactoperoxidase (LPO).